The sequence spans 462 residues: Ribosomal protein uS12 methylthiotransferase RimO (462 aa).

One can recognise an MTTase N-terminal domain in the interval 10–125 (PRIGMVSLGC…VLDAVHRNLP (116 aa)). [4Fe-4S] cluster contacts are provided by Cys19, Cys55, Cys84, Cys160, Cys164, and Cys167. Residues 146–388 (LTPRHYAYLK…AVAEALSSAK (243 aa)) form the Radical SAM core domain. In terms of domain architecture, TRAM spans 390 to 462 (QRRVGATMQV…RGHDLLAQPI (73 aa)).

Belongs to the methylthiotransferase family. RimO subfamily. Requires [4Fe-4S] cluster as cofactor.

It is found in the cytoplasm. It carries out the reaction L-aspartate(89)-[ribosomal protein uS12]-hydrogen + (sulfur carrier)-SH + AH2 + 2 S-adenosyl-L-methionine = 3-methylsulfanyl-L-aspartate(89)-[ribosomal protein uS12]-hydrogen + (sulfur carrier)-H + 5'-deoxyadenosine + L-methionine + A + S-adenosyl-L-homocysteine + 2 H(+). In terms of biological role, catalyzes the methylthiolation of an aspartic acid residue of ribosomal protein uS12. The sequence is that of Ribosomal protein uS12 methylthiotransferase RimO from Verminephrobacter eiseniae (strain EF01-2).